The sequence spans 523 residues: Succinate-semialdehyde dehydrogenase, mitochondrial (523 aa).

The N-terminal 35 residues, 1 to 35, are a transit peptide targeting the mitochondrion; it reads MATCFLLRSFWAARPALPPPGRFRPEPAGTPRRSY. Lysine 74 is modified (N6-acetyllysine). The residue at position 114 (lysine 114) is an N6-acetyllysine; alternate. Position 114 is an N6-succinyllysine; alternate (lysine 114). Lysine 123 is modified (N6-succinyllysine). Lysine 128 is modified (N6-acetyllysine). N6-succinyllysine is present on lysine 172. Residues arginine 201 and 216 to 219 contribute to the NAD(+) site; that span reads KPAE. Substrate is bound at residue arginine 201. Position 253 is an N6-acetyllysine; alternate (lysine 253). Lysine 253 carries the N6-succinyllysine; alternate modification. 272–277 lines the NAD(+) pocket; sequence GSTATG. Glutamate 294 (proton acceptor) is an active-site residue. Position 322 (arginine 322) interacts with substrate. The active-site Nucleophile is cysteine 328. An intrachain disulfide couples cysteine 328 to cysteine 330. Residue lysine 347 is modified to N6-acetyllysine; alternate. At lysine 347 the chain carries N6-succinyllysine; alternate. Lysine 353 bears the N6-acetyllysine mark. Lysine 390 is subject to N6-succinyllysine. Position 399 is an N6-acetyllysine (lysine 399). A Phosphoserine modification is found at serine 403. A substrate-binding site is contributed by serine 486. Serine 487 is modified (phosphoserine).

Belongs to the aldehyde dehydrogenase family. Homotetramer.

The protein localises to the mitochondrion. The catalysed reaction is succinate semialdehyde + NAD(+) + H2O = succinate + NADH + 2 H(+). The protein operates within amino-acid degradation; 4-aminobutanoate degradation. With respect to regulation, redox-regulated. Inhibited under oxydizing conditions. Its function is as follows. Catalyzes one step in the degradation of the inhibitory neurotransmitter gamma-aminobutyric acid (GABA). In Mus musculus (Mouse), this protein is Succinate-semialdehyde dehydrogenase, mitochondrial (Aldh5a1).